The sequence spans 260 residues: Endonuclease NucS (260 aa).

It belongs to the NucS endonuclease family.

The protein resides in the cytoplasm. Functionally, cleaves both 3' and 5' ssDNA extremities of branched DNA structures. This chain is Endonuclease NucS, found in Methanopyrus kandleri (strain AV19 / DSM 6324 / JCM 9639 / NBRC 100938).